The primary structure comprises 1499 residues: Rap guanine nucleotide exchange factor 2 (1499 aa).

Disordered stretches follow at residues histidine 40 to leucine 59 and serine 68 to leucine 101. Positions valine 83 to isoleucine 94 are enriched in acidic residues. A nucleoside 3',5'-cyclic phosphate is bound at residue alanine 135 to valine 254. An N-terminal Ras-GEF domain is found at lysine 267–lysine 380. Positions leucine 385 to phenylalanine 470 constitute a PDZ domain. Serine 501 carries the post-translational modification Phosphoserine. One can recognise a Ras-associating domain in the interval proline 606–glutamate 692. Threonine 644 bears the Phosphothreonine; by PLK2 mark. The Ras-GEF domain maps to serine 717–leucine 944. Serine 806 carries the post-translational modification Phosphoserine; by PLK2. Serine 930 carries the post-translational modification Phosphoserine. Serine 933 bears the Phosphoserine; by PLK2 mark. Positions proline 1002–isoleucine 1050 are disordered. Serine 1022 carries the phosphoserine modification. A compositionally biased stretch (low complexity) spans glutamine 1031 to proline 1040. Phosphoserine occurs at positions 1080, 1089, 1095, 1116, 1120, and 1159. The segment at serine 1095–phenylalanine 1160 is disordered. Composition is skewed to low complexity over residues serine 1111–proline 1125 and serine 1141–phenylalanine 1160. A Phosphoserine; by PLK2 modification is found at serine 1176. Disordered stretches follow at residues proline 1224–serine 1256 and threonine 1305–valine 1499. Composition is skewed to polar residues over residues glycine 1247 to serine 1256 and tyrosine 1307 to glycine 1331. Residues glutamate 1355–threonine 1366 show a composition bias toward low complexity. The span at serine 1441 to proline 1462 shows a compositional bias: polar residues. Over residues threonine 1488 to valine 1499 the composition is skewed to acidic residues.

The protein belongs to the RAPGEF2 family. As to quaternary structure, interacts with CDH1, CTNNB1 and TJP1. Interacts (via C-terminal domain) with MAGI2 (via PDZ and WW domains); the interaction occurs before or after NGF stimulation. Interacts with KIDINS220 and NTRK1; the interactions occur after NGF stimulation. Found in a complex, at least composed of KIDINS220, MAGI2, NTRK1 and RAPGEF2; the complex is mainly formed at late endosomes in a neuronal growth factor (NGF)-dependent manner. Interacts (via C-terminal domain) with NEDD4 (via WW domains); this interaction leads to ubiquitination and degradation via the proteasome pathway in a cAMP-independent manner. Interacts with MAGI1 isoform 3 (via PDZ domain). Interacts with ADRB1 (via C-terminal PDZ motif); the interaction is direct. Interacts (via Ras-associating domain) with RAP1A (via GTP-bound active form). Interacts weakly with HRAS (via GDP- and GTP-bound forms). Interacts (via C-terminal domain) with MAGI2 (via PDZ and WW domains). Post-translationally, ubiquitinated by NEDD4, leading to proteasomal degradation. Phosphorylation by PLK2 promotes its activity. Expressed in primary neuronal and endocrine cells (at protein level). Highest expression levels in brain. Lower expression levels in heart, kidney, lung, placenta and blood leukocytes.

It localises to the cytoplasm. The protein localises to the perinuclear region. It is found in the cell membrane. Its subcellular location is the late endosome. The protein resides in the cell junction. Its function is as follows. Functions as a guanine nucleotide exchange factor (GEF), which activates Rap and Ras family of small GTPases by exchanging bound GDP for free GTP in a cAMP-dependent manner. Serves as a link between cell surface receptors and Rap/Ras GTPases in intracellular signaling cascades. Also acts as an effector for Rap1 by direct association with Rap1-GTP thereby leading to the amplification of Rap1-mediated signaling. Shows weak activity on HRAS. It is controversial whether RAPGEF2 binds cAMP and cGMP or not. Its binding to ligand-activated beta-1 adrenergic receptor ADRB1 leads to the Ras activation through the G(s)-alpha signaling pathway. Involved in the cAMP-induced Ras and Erk1/2 signaling pathway that leads to sustained inhibition of long term melanogenesis by reducing dendrite extension and melanin synthesis. Also provides inhibitory signals for cell proliferation of melanoma cells and promotes their apoptosis in a cAMP-independent nanner. Regulates cAMP-induced neuritogenesis by mediating the Rap1/B-Raf/ERK signaling through a pathway that is independent on both PKA and RAPGEF3/RAPGEF4. Involved in neuron migration and in the formation of the major forebrain fiber connections forming the corpus callosum, the anterior commissure and the hippocampal commissure during brain development. Involved in neuronal growth factor (NGF)-induced sustained activation of Rap1 at late endosomes and in brain-derived neurotrophic factor (BDNF)-induced axon outgrowth of hippocampal neurons. Plays a role in the regulation of embryonic blood vessel formation and in the establishment of basal junction integrity and endothelial barrier function. May be involved in the regulation of the vascular endothelial growth factor receptor KDR and cadherin CDH5 expression at allantois endothelial cell-cell junctions. The polypeptide is Rap guanine nucleotide exchange factor 2 (RAPGEF2) (Homo sapiens (Human)).